Consider the following 121-residue polypeptide: Large ribosomal subunit protein bL20 (121 aa).

It belongs to the bacterial ribosomal protein bL20 family.

In terms of biological role, binds directly to 23S ribosomal RNA and is necessary for the in vitro assembly process of the 50S ribosomal subunit. It is not involved in the protein synthesizing functions of that subunit. This chain is Large ribosomal subunit protein bL20, found in Beijerinckia indica subsp. indica (strain ATCC 9039 / DSM 1715 / NCIMB 8712).